Here is a 1985-residue protein sequence, read N- to C-terminus: Non-reducing polyketide synthase ntnG (1985 aa).

The tract at residues 7–243 (LLFGDQADAP…TILPAFGAVH (237 aa)) is N-terminal acylcarrier protein transacylase (SAT) domain. Residues 364–792 (SGSVAIIGMS…GGNSCFVLEE (429 aa)) enclose the Ketosynthase family 3 (KS3) domain. Active-site for beta-ketoacyl synthase activity residues include cysteine 536, histidine 671, and histidine 711. Residues 889 to 1148 (VFAFTGQGAH…VNFEQAISHC (260 aa)) are malonyl-CoA:ACP transacylase (MAT) domain. Serine 980 (for acyl/malonyl transferase activity) is an active-site residue. Residues 1261-1392 (HRLVKQEDTA…VRLRDEHAFD (132 aa)) are N-terminal hotdog fold. The PKS/mFAS DH domain occupies 1261-1567 (HRLVKQEDTA…FRKMPRTTLH (307 aa)). The interval 1265 to 1566 (KQEDTAKEQH…RFRKMPRTTL (302 aa)) is product template (PT) domain. Histidine 1293 serves as the catalytic Proton acceptor; for dehydratase activity. The C-terminal hotdog fold stretch occupies residues 1414 to 1567 (AGGRANRFQG…FRKMPRTTLH (154 aa)). The active-site Proton donor; for dehydratase activity is aspartate 1479. The segment covering 1578–1605 (NTKQVPHPTTNGSAIANGVNRNPSHNEP) has biased composition (polar residues). Residues 1578–1622 (NTKQVPHPTTNGSAIANGVNRNPSHNEPSTPPVANGVNGTNGDQS) are disordered. Residues 1622-1699 (SDRKSLYSVL…DAQRELRRLE (78 aa)) form the Carrier domain. O-(pantetheine 4'-phosphoryl)serine is present on serine 1659. Residues 1719 to 1913 (TRECNVVLMQ…DCTFVIWAKK (195 aa)) are thioesterase (TE) domain.

The protein operates within secondary metabolite biosynthesis; terpenoid biosynthesis. Functionally, non-reducing polyketide synthase; part of the gene cluster that mediates the biosynthesis of the meroterpenoids nectripenoids A and B, as well as cochliquninone D and isocochliquninone E. The pathway probably begins with the HR-PKS ntnH that catalyzes two chain-extension steps to form a reduced triketide, which then primes the SAT domain in the NR-PKS ntnG to initiate three more cycles of extension to give a linear hexaketide corresponding to the polyketide part of nectripenoids. The FAD-dependent monooxygenase ntnJ then performs an oxidative decarboxylation at C11 of the ntnH/ntnG product, via an electrophilic aromatic hydroxylation with concomitant ipso-decarboxylation. The membrane-bound polyprenyl transferase ntnF then introduces a farnesyl group before the FAD-dependent monooxygenase ntnK functions as the first epoxidase on terminal C12'-C13' olefin, followed by a second epoxidation on C7'-C8' catalyzed by ntnA. The terpene cyclase/mutase ntnI then initiates the sequential tricyclic ring formation through protonation of the terminal epoxide and catalyzes the regioselective and stereoselective 6/6/6-tricyclic ring formation. The cytochrome P450 monooxygenase ntnM may then hydroxylate C1'. This chain is Non-reducing polyketide synthase ntnG, found in Nectria sp.